The sequence spans 212 residues: Cytidylate kinase (212 aa).

Residue 7-15 participates in ATP binding; that stretch reads GPAASGKGT.

Belongs to the cytidylate kinase family. Type 1 subfamily.

It is found in the cytoplasm. It carries out the reaction CMP + ATP = CDP + ADP. The catalysed reaction is dCMP + ATP = dCDP + ADP. The chain is Cytidylate kinase from Rhodopseudomonas palustris (strain BisB5).